The following is a 345-amino-acid chain: Anthranilate phosphoribosyltransferase (345 aa).

5-phospho-alpha-D-ribose 1-diphosphate is bound by residues G79, 82 to 83, T87, 89 to 92, 106 to 114, and S118; these read GD, NVST, and KHGNRAVSG. Anthranilate is bound at residue G79. S91 contacts Mg(2+). An anthranilate-binding site is contributed by N109. Anthranilate is bound at residue R164. Positions 223 and 224 each coordinate Mg(2+).

The protein belongs to the anthranilate phosphoribosyltransferase family. Homodimer. Mg(2+) serves as cofactor.

It carries out the reaction N-(5-phospho-beta-D-ribosyl)anthranilate + diphosphate = 5-phospho-alpha-D-ribose 1-diphosphate + anthranilate. It participates in amino-acid biosynthesis; L-tryptophan biosynthesis; L-tryptophan from chorismate: step 2/5. Catalyzes the transfer of the phosphoribosyl group of 5-phosphorylribose-1-pyrophosphate (PRPP) to anthranilate to yield N-(5'-phosphoribosyl)-anthranilate (PRA). This Saccharolobus islandicus (strain L.S.2.15 / Lassen #1) (Sulfolobus islandicus) protein is Anthranilate phosphoribosyltransferase.